A 320-amino-acid polypeptide reads, in one-letter code: Putative protein FRMPD2-like (320 aa).

PDZ domains are found at residues 1-46 (MTSI…ERRV) and 90-178 (EVKL…CRPP). The tract at residues 215-239 (DQEDSWRDSASPDAGEGLGLRPESS) is disordered.

This is Putative protein FRMPD2-like from Homo sapiens (Human).